A 148-amino-acid polypeptide reads, in one-letter code: Receptor activity-modifying protein 1 (148 aa).

Residues 1–26 (MAPGLRGLPRRGLWLLLAHHLFMVTA) form the signal peptide. Cystine bridges form between C27–C82, C40–C72, and C57–C104. Over 27–118 (CRDPDYGTLI…RALRDPPNSI (92 aa)) the chain is Extracellular. Residues 119 to 140 (LCPFIVLPITVTLLMTALVVWR) form a helical membrane-spanning segment. The Cytoplasmic segment spans residues 141 to 148 (SKRTEGIV).

Belongs to the RAMP family. Heterodimer of CALCRL and RAMP1; the interaction induces allosteric modulation of CALCRL function and CGRP1/CALCA and CGRP2/CALCB ligand specificity. Heterodimer of CALCR and RAMP1; interaction forms the AMYR1 receptor complex for amylin/IAPP and CGRP1/CALCA ligands.

It localises to the cell membrane. In terms of biological role, accessory protein that interacts with and modulates the function of G-protein coupled receptors including calcitonin gene-related peptide type 1 receptor (CALCRL) and calcitonin receptor (CALCR). Required for the transport of CALCRL to the plasma membrane. Together with CALCRL, form the receptor complex for the calcitonin gene-related peptides CGRP1/CALCA and CGRP2/CALCB. Together with CALCR, form the AMYR1 receptor complex for amylin/IAPP and CGRP1/CALCA. The polypeptide is Receptor activity-modifying protein 1 (Rattus norvegicus (Rat)).